The sequence spans 92 residues: Serine protease inhibitor I/II (92 aa).

The signal sequence occupies residues methionine 1–alanine 19. 2 consecutive Pacifastin domains span residues glutamate 20 to histidine 54 and glutamate 57 to lysine 92. Disulfide bonds link cysteine 23-cysteine 38, cysteine 33-cysteine 51, cysteine 36-cysteine 46, cysteine 60-cysteine 75, cysteine 70-cysteine 89, and cysteine 73-cysteine 84.

This sequence belongs to the protease inhibitor I19 family. In terms of tissue distribution, expressed in hemolymph, ovaries, testes and fat body of adults but are absent in the gut. Also present in larval hemolymph and fat body.

The protein localises to the secreted. Its function is as follows. In vitro, is active against alpha-chymotrypsin and trypsin. Functionally, in vitro, is active against alpha-chymotrypsin and pancreatic elastase. The polypeptide is Serine protease inhibitor I/II (Schistocerca gregaria (Desert locust)).